Here is a 168-residue protein sequence, read N- to C-terminus: Photosystem I assembly protein Ycf3 (168 aa).

TPR repeat units lie at residues 35-68 (AFTY…EIDP), 72-105 (SYIL…NPFL), and 120-153 (GEQA…TPGN).

Belongs to the Ycf3 family.

Its subcellular location is the plastid. The protein resides in the chloroplast thylakoid membrane. Functionally, essential for the assembly of the photosystem I (PSI) complex. May act as a chaperone-like factor to guide the assembly of the PSI subunits. This Panax ginseng (Korean ginseng) protein is Photosystem I assembly protein Ycf3.